The chain runs to 121 residues: Large ribosomal subunit protein bL12 (121 aa).

Belongs to the bacterial ribosomal protein bL12 family. Homodimer. Part of the ribosomal stalk of the 50S ribosomal subunit. Forms a multimeric L10(L12)X complex, where L10 forms an elongated spine to which 2 to 4 L12 dimers bind in a sequential fashion. Binds GTP-bound translation factors.

Functionally, forms part of the ribosomal stalk which helps the ribosome interact with GTP-bound translation factors. Is thus essential for accurate translation. This chain is Large ribosomal subunit protein bL12, found in Halalkalibacterium halodurans (strain ATCC BAA-125 / DSM 18197 / FERM 7344 / JCM 9153 / C-125) (Bacillus halodurans).